The primary structure comprises 345 residues: S-adenosylmethionine:tRNA ribosyltransferase-isomerase (345 aa).

This sequence belongs to the QueA family. Monomer.

It localises to the cytoplasm. It carries out the reaction 7-aminomethyl-7-carbaguanosine(34) in tRNA + S-adenosyl-L-methionine = epoxyqueuosine(34) in tRNA + adenine + L-methionine + 2 H(+). Its pathway is tRNA modification; tRNA-queuosine biosynthesis. In terms of biological role, transfers and isomerizes the ribose moiety from AdoMet to the 7-aminomethyl group of 7-deazaguanine (preQ1-tRNA) to give epoxyqueuosine (oQ-tRNA). This Shewanella sp. (strain MR-4) protein is S-adenosylmethionine:tRNA ribosyltransferase-isomerase.